The following is a 421-amino-acid chain: Zinc finger protein 57 (421 aa).

A KRAB domain is found at 15–88; the sequence is VSYEDVAVSF…SCTGVFKGGP (74 aa). A C2H2-type 1; degenerate zinc finger spans residues 90-113; it reads FFCLTCGKCFKKNTFLFNHQFPVR. 2 consecutive C2H2-type zinc fingers follow at residues 140 to 162 and 168 to 190; these read FFCNFCGKTYRDASGLSRHRRAH and RSCPECGKCFRDQSEVNRHLKVH. Positions 191-221 are disordered; the sequence is QNKPAASNQAGNQASNQRLKSRVPPTTPRSQ. Residues 195–207 are compositionally biased toward low complexity; it reads AASNQAGNQASNQ. The C2H2-type 4 zinc finger occupies 264–286; sequence ISCPYCHITFTMRTCLLTHLKIH. The segment at 313–332 adopts a C2H2-type 5; degenerate zinc-finger fold; that stretch reads YTCPVCDSSFRGKESLLDHL. The interval 371–421 is disordered; the sequence is GKRMESRRRRRKRACTENPETEGLSGKGRVAPWEMEGATSPESPVTEEDSD.

Belongs to the krueppel C2H2-type zinc-finger protein family. As to expression, expressed in oocytes and in a subset of adult tissues. Expressed at high levels in testis, and at low levels in cerebellum. Present in sciatic nerve and spinal cord (at protein level).

The protein localises to the nucleus. Functionally, transcription regulator required to maintain maternal and paternal gene imprinting, a process by which gene expression is restricted in a parent of origin-specific manner by epigenetic modification of genomic DNA and chromatin, including DNA methylation. Acts by controlling DNA methylation during the earliest multicellular stages of development at multiple imprinting control regions (ICRs). Acts together with ZNF445, but ZFP57 plays the predominant role in imprinting maintenance. In contrast, in humans, ZNF445 seems to be the major factor early embryonic imprinting maintenance. Required for the establishment of maternal methylation imprints at SNRPN locus. Acts as a transcriptional repressor in Schwann cells. Binds to a 5'-TGCCGC-3' consensus sequence and recognizes the methylated CpG within this element. This is Zinc finger protein 57 (Zfp57) from Mus musculus (Mouse).